Reading from the N-terminus, the 434-residue chain is O-phosphoseryl-tRNA(Sec) selenium transferase (434 aa).

The tract at residues 1–40 (MGLNITGLIPKHMENRGKLTLKENLKIIENILEQRKAPEN) is tetramerization. Arg-71 contributes to the pyridoxal 5'-phosphate binding site. Residues 92 to 102 (GRSGNLIDPQP) are phosphate loop (P-loop). Substrate contacts are provided by Arg-93, Ser-94, and Gln-101. Lys-277 carries the post-translational modification N6-(pyridoxal phosphate)lysine. A substrate-binding site is contributed by Arg-306.

This sequence belongs to the SepSecS family. Homotetramer. Pyridoxal 5'-phosphate is required as a cofactor.

It catalyses the reaction O-phospho-L-seryl-tRNA(Sec) + selenophosphate + H2O = L-selenocysteinyl-tRNA(Sec) + 2 phosphate. It functions in the pathway aminoacyl-tRNA biosynthesis; selenocysteinyl-tRNA(Sec) biosynthesis; selenocysteinyl-tRNA(Sec) from L-seryl-tRNA(Sec) (archaeal/eukaryal route): step 2/2. Functionally, converts O-phosphoseryl-tRNA(Sec) to selenocysteinyl-tRNA(Sec) required for selenoprotein biosynthesis. This Methanocaldococcus jannaschii (strain ATCC 43067 / DSM 2661 / JAL-1 / JCM 10045 / NBRC 100440) (Methanococcus jannaschii) protein is O-phosphoseryl-tRNA(Sec) selenium transferase (spcS).